A 411-amino-acid polypeptide reads, in one-letter code: Lycopene beta cyclase (411 aa).

Residue 4–32 (ALVIGSGPAGLAIAAELAQRGLKVQGLSP) coordinates NAD(+).

This sequence belongs to the lycopene cyclase family. It depends on FAD as a cofactor.

The catalysed reaction is a carotenoid psi-end group = a carotenoid beta-end derivative. It catalyses the reaction all-trans-lycopene = gamma-carotene. The enzyme catalyses gamma-carotene = all-trans-beta-carotene. It carries out the reaction all-trans-neurosporene = beta-zeacarotene. The protein operates within carotenoid biosynthesis; beta-carotene biosynthesis. Its pathway is carotenoid biosynthesis; beta-zeacarotene biosynthesis. With respect to regulation, inhibited by the bleaching herbicide 2-(4-methylphenoxy)triethylamine hydrochloride (MPTA). In terms of biological role, catalyzes the double cyclization reaction which converts lycopene to beta-carotene. It also converts neurosporene to the monocyclic beta-zeacarotene but does not cyclize zeta-carotene. In Synechococcus elongatus (strain ATCC 33912 / PCC 7942 / FACHB-805) (Anacystis nidulans R2), this protein is Lycopene beta cyclase.